The following is a 425-amino-acid chain: Polyribonucleotide 5'-hydroxyl-kinase Clp1 (425 aa).

Residues glutamate 22, lysine 62, and 124-129 (DVGKST) contribute to the ATP site.

It belongs to the Clp1 family. Clp1 subfamily. In terms of assembly, component of the tRNA splicing endonuclease complex. Component of pre-mRNA cleavage complex II (CF-II).

Its subcellular location is the nucleus. The enzyme catalyses a 5'-end dephospho-2'-deoxyribonucleoside-DNA + ATP = a 5'-end 5'-phospho-2'-deoxyribonucleoside-DNA + ADP + H(+). It catalyses the reaction a 5'-end dephospho-ribonucleoside-RNA + ATP = a 5'-end 5'-phospho-ribonucleoside-RNA + ADP + H(+). Functionally, polynucleotide kinase that can phosphorylate the 5'-hydroxyl groups of double-stranded RNA (dsRNA), single-stranded RNA (ssRNA), double stranded DNA (dsDNA) and double-stranded DNA:RNA hybrids. dsRNA is phosphorylated more efficiently than dsDNA, and the RNA component of a DNA:RNA hybrid is phosphorylated more efficiently than the DNA component. Plays a role in both tRNA splicing and mRNA 3'-end formation. Component of the tRNA splicing endonuclease complex: phosphorylates the 5'-terminus of the tRNA 3'-exon during tRNA splicing; this phosphorylation event is a prerequisite for the subsequent ligation of the two exon halves and the production of a mature tRNA. Its role in tRNA splicing and maturation is required for cerebellar development. Component of the pre-mRNA cleavage complex II (CF-II), which seems to be required for mRNA 3'-end formation. Also phosphorylates the 5'-terminus of exogenously introduced short interfering RNAs (siRNAs), which is a necessary prerequisite for their incorporation into the RNA-induced silencing complex (RISC). However, endogenous siRNAs and microRNAs (miRNAs) that are produced by the cleavage of dsRNA precursors by dicer1 already contain a 5'-phosphate group, so this protein may be dispensible for normal RNA-mediated gene silencing. This chain is Polyribonucleotide 5'-hydroxyl-kinase Clp1, found in Gallus gallus (Chicken).